The chain runs to 574 residues: Splicing factor U2af large subunit A (574 aa).

The segment at 1–180 (MAEHEEQPYE…SKRVSGFDQG (180 aa)) is disordered. Residues 18–41 (PAPASAYAEYPAPEGSPPAAAAKP) are compositionally biased toward low complexity. Positions 53 to 143 (RSQHETQPHD…ERRRDRDRDG (91 aa)) are enriched in basic and acidic residues. Residues 144 to 172 (HRRHRSRSRSPSKGRDRRSRSRSRSRSSK) are compositionally biased toward basic residues. RRM domains are found at residues 238-321 (RRVY…RPTD), 358-436 (DRIF…RANQ), and 479-565 (QVVS…YPED).

This sequence belongs to the splicing factor SR family.

It is found in the nucleus. In terms of biological role, necessary for the splicing of pre-mRNA. In Oryza sativa subsp. japonica (Rice), this protein is Splicing factor U2af large subunit A (U2AF65A).